Here is a 338-residue protein sequence, read N- to C-terminus: Heat-inducible transcription repressor HrcA (338 aa).

This sequence belongs to the HrcA family.

In terms of biological role, negative regulator of class I heat shock genes (grpE-dnaK-dnaJ and groELS operons). Prevents heat-shock induction of these operons. This Bacillus thuringiensis (strain Al Hakam) protein is Heat-inducible transcription repressor HrcA.